The chain runs to 194 residues: Heme transporter hrg-1 (194 aa).

The next 4 membrane-spanning stretches (helical) occupy residues 45-65 (QIWI…VFAI), 71-91 (IAVT…HLHL), 113-133 (GATV…VAGI), and 143-163 (LMGA…KWSA). Positions 182 to 183 (LL) match the Di-leucine motif motif.

It belongs to the HRG family. Specifically expressed in the intestinal cells in larvae and adults.

The protein localises to the endosome membrane. The protein resides in the lysosome membrane. Its function is as follows. Heme transporter that regulates intracellular heme availability through the endosomal or lysosomal compartment. The chain is Heme transporter hrg-1 (hrg-1) from Caenorhabditis elegans.